Here is a 442-residue protein sequence, read N- to C-terminus: Ankyrin repeat and MYND domain-containing protein 2 (442 aa).

3 ANK repeats span residues 45–74, 79–108, and 159–188; these read NGMT…DVNC, HGYT…ETDV, and KLAG…NPLL. Zn(2+) contacts are provided by Cys-320, Cys-323, Cys-332, Cys-335, Cys-341, Cys-345, His-353, and Cys-357. The segment at 320-357 adopts an MYND-type zinc-finger fold; that stretch reads CTTCGEKGASKRCSVCKMVIYCDQTCQKTHWFAHKKIC. A compositionally biased stretch (basic and acidic residues) spans 401–421; that stretch reads TRICQKNDNPKDSEEGEKESL. A disordered region spans residues 401 to 442; it reads TRICQKNDNPKDSEEGEKESLQSDAGLEGLQEAAVGPQVSEE.

In terms of assembly, interacts with the retinal-specific guanylyl cyclase GC1.

It is found in the cell projection. It localises to the cilium. Functionally, may be involved in the trafficking of signaling proteins to the cilia. In Bos taurus (Bovine), this protein is Ankyrin repeat and MYND domain-containing protein 2 (ANKMY2).